The sequence spans 474 residues: MTKKLHIKTWGCQMNEYDSSKMADLLDATHGYQLTEVAEEADVLLLNTCSIREKAQEKVFHQLGRWKLLKEKNPDLIIGVGGCVASQEGDHIRQRAHYVDIIFGPQTLHRLPEMINSVRGNRSPVVDISFPEIEKFDRLPEPRAEGPTAFVSIMEGCNKYCTYCVVPYTRGEEVSRPCDDILFEIAQLAAQGVREVNLLGQNVNAWRGENYDGTTGSFADLLRLVAAIDGIDRIRFTTSHPIEFTDDIIDVYRDTPELVSFLHLPVQSGSDRVLNLMGRTHTALEYKAIIRKLREARPDIQISSDFIVGFPGETTEDFEKTMKLIADVNFDMSYSFIFSARPGTPAADMVDDVPEADKKQRLYILQERINQQAMAWSRRMLGTVQRILVEGTSRKNIMELSGRTENNRVVNFEGTPDLVGKFVDVEIVDVYTNSLRGKIVRTEAEMGLRIAESPESVIARTRKENDLGVGIYQP.

An MTTase N-terminal domain is found at 3-120 (KKLHIKTWGC…LPEMINSVRG (118 aa)). 6 residues coordinate [4Fe-4S] cluster: cysteine 12, cysteine 49, cysteine 83, cysteine 157, cysteine 161, and cysteine 164. Residues 143–375 (RAEGPTAFVS…QERINQQAMA (233 aa)) enclose the Radical SAM core domain. One can recognise a TRAM domain in the interval 378–441 (RRMLGTVQRI…TNSLRGKIVR (64 aa)).

This sequence belongs to the methylthiotransferase family. MiaB subfamily. In terms of assembly, monomer. It depends on [4Fe-4S] cluster as a cofactor.

The protein resides in the cytoplasm. The enzyme catalyses N(6)-dimethylallyladenosine(37) in tRNA + (sulfur carrier)-SH + AH2 + 2 S-adenosyl-L-methionine = 2-methylsulfanyl-N(6)-dimethylallyladenosine(37) in tRNA + (sulfur carrier)-H + 5'-deoxyadenosine + L-methionine + A + S-adenosyl-L-homocysteine + 2 H(+). In terms of biological role, catalyzes the methylthiolation of N6-(dimethylallyl)adenosine (i(6)A), leading to the formation of 2-methylthio-N6-(dimethylallyl)adenosine (ms(2)i(6)A) at position 37 in tRNAs that read codons beginning with uridine. The polypeptide is tRNA-2-methylthio-N(6)-dimethylallyladenosine synthase (Klebsiella pneumoniae subsp. pneumoniae (strain ATCC 700721 / MGH 78578)).